The chain runs to 371 residues: MAELQEVQITEEKPLLPGQTPEAAKEAELAARILLDQGQTHSVETPYGSVTFTVYGTPKPKRPAILTYHDVGLNYKSCFQPLFQFEDMQEIIQNFVRVHVDAPGMEEGAPVFPLGYQYPSLDQLADMIPCVLQYLNFSTIIGVGVGAGAYILARYALNHPDTVEGLVLINIDPNAKGWMDWAAHKLTGLTSSIPEMILGHLFSQEELSGNSELIQKYRNIITHAPNLDNIELYWNSYNNRRDLNFERGGDITLRCPVMLVVGDQAPHEDAVVECNSKLDPTQTSFLKMADSGGQPQLTQPGKLTEAFKYFLQGMGYMASSCMTRLSRSRTASLTSAASVDGNRSRSRTLSQSSESGTLSSGPPGHTMEVSC.

Residues 1–21 form a disordered region; that stretch reads MAELQEVQITEEKPLLPGQTP. Ala-2 bears the N-acetylalanine mark. Thr-20 carries the post-translational modification Phosphothreonine. Phosphoserine is present on residues Ser-326 and Ser-328. Residue Thr-330 is modified to Phosphothreonine. At Ser-332 the chain carries Phosphoserine. Thr-334 carries the phosphothreonine modification. Residues 334–371 are disordered; that stretch reads TSAASVDGNRSRSRTLSQSSESGTLSSGPPGHTMEVSC. Phosphoserine occurs at positions 335, 338, and 344. The segment covering 347–361 has biased composition (low complexity); that stretch reads RTLSQSSESGTLSSG. Thr-348 carries the phosphothreonine modification. Phosphoserine occurs at positions 350, 352, 353, and 355. Thr-357 carries the phosphothreonine modification. Phosphoserine is present on Ser-370.

The protein belongs to the NDRG family. In terms of assembly, interacts with CTNNB1. As to expression, highly expressed in brain, heart, skeletal muscle and salivary gland, and moderately in kidney and liver. Expressed in dendritic cells, but not in other blood cells. Expression levels are low in pancreatic and liver cancer tissues; absent in meningioma. Expressed in low-grade gliomas but present at low levels in glioblastoma. Isoform 1 and isoform 2 are present in brain neurons and up-regulated in Alzheimer disease (at protein level).

The protein localises to the cytoplasm. It localises to the perinuclear region. Its subcellular location is the cell projection. The protein resides in the growth cone. Its function is as follows. Contributes to the regulation of the Wnt signaling pathway. Down-regulates CTNNB1-mediated transcriptional activation of target genes, such as CCND1, and may thereby act as tumor suppressor. May be involved in dendritic cell and neuron differentiation. This is Protein NDRG2 (NDRG2) from Homo sapiens (Human).